The primary structure comprises 163 residues: Nucleotide-binding protein Ava_2001 (163 aa).

Belongs to the YajQ family.

Its function is as follows. Nucleotide-binding protein. This Trichormus variabilis (strain ATCC 29413 / PCC 7937) (Anabaena variabilis) protein is Nucleotide-binding protein Ava_2001.